A 550-amino-acid polypeptide reads, in one-letter code: CTP synthase (550 aa).

An amidoligase domain region spans residues 1 to 277 (MNGSADAGPR…GRAVERALGL (277 aa)). Ser-23 lines the CTP pocket. A UTP-binding site is contributed by Ser-23. 24-29 (SLGKGI) provides a ligand contact to ATP. Position 64 (Tyr-64) interacts with L-glutamine. Asp-81 lines the ATP pocket. Residues Asp-81 and Glu-151 each contribute to the Mg(2+) site. CTP contacts are provided by residues 158-160 (DIE), 198-203 (KTKPTQ), and Lys-234. UTP-binding positions include 198–203 (KTKPTQ) and Lys-234. Positions 302–549 (KIAIAGKYVK…VEAALAYQER (248 aa)) constitute a Glutamine amidotransferase type-1 domain. Gly-364 is a binding site for L-glutamine. Cys-391 serves as the catalytic Nucleophile; for glutamine hydrolysis. Residues 392 to 395 (LGLQ), Glu-415, and Arg-472 contribute to the L-glutamine site. Residues His-522 and Glu-524 contribute to the active site.

Belongs to the CTP synthase family. In terms of assembly, homotetramer.

The enzyme catalyses UTP + L-glutamine + ATP + H2O = CTP + L-glutamate + ADP + phosphate + 2 H(+). It catalyses the reaction L-glutamine + H2O = L-glutamate + NH4(+). The catalysed reaction is UTP + NH4(+) + ATP = CTP + ADP + phosphate + 2 H(+). It functions in the pathway pyrimidine metabolism; CTP biosynthesis via de novo pathway; CTP from UDP: step 2/2. Its activity is regulated as follows. Allosterically activated by GTP, when glutamine is the substrate; GTP has no effect on the reaction when ammonia is the substrate. The allosteric effector GTP functions by stabilizing the protein conformation that binds the tetrahedral intermediate(s) formed during glutamine hydrolysis. Inhibited by the product CTP, via allosteric rather than competitive inhibition. Catalyzes the ATP-dependent amination of UTP to CTP with either L-glutamine or ammonia as the source of nitrogen. Regulates intracellular CTP levels through interactions with the four ribonucleotide triphosphates. This is CTP synthase from Thermus thermophilus (strain ATCC BAA-163 / DSM 7039 / HB27).